Here is a 101-residue protein sequence, read N- to C-terminus: Large ribosomal subunit protein uL23 (101 aa).

The protein belongs to the universal ribosomal protein uL23 family. In terms of assembly, part of the 50S ribosomal subunit. Contacts protein L29, and trigger factor when it is bound to the ribosome.

In terms of biological role, one of the early assembly proteins it binds 23S rRNA. One of the proteins that surrounds the polypeptide exit tunnel on the outside of the ribosome. Forms the main docking site for trigger factor binding to the ribosome. This Trichodesmium erythraeum (strain IMS101) protein is Large ribosomal subunit protein uL23.